We begin with the raw amino-acid sequence, 188 residues long: Protein SSX4 (188 aa).

One can recognise a KRAB-related domain in the interval 20-83 (KLRKAFDDIA…KRAADFHGND (64 aa)). Positions 116 to 127 (PAEEENGLKEVP) are enriched in basic and acidic residues. The segment at 116–167 (PAEEENGLKEVPEASGPQNDGKQLCPPGNPSTLEKINKTSGPKRGKHAWTHR) is disordered. Positions 145-155 (PSTLEKINKTS) are enriched in polar residues. Residues 156 to 167 (GPKRGKHAWTHR) are compositionally biased toward basic residues.

Belongs to the SSX family.

In terms of biological role, could act as a modulator of transcription. This Homo sapiens (Human) protein is Protein SSX4 (SSX4).